Reading from the N-terminus, the 372-residue chain is Nucleosome assembly protein 1;1 (372 aa).

Residues 26-80 (VNALKNKLQNLAGQRSDVLENLTPNVRKRVDALRDIQSQHDELEAKFREERAILE) adopt a coiled-coil conformation. Residue Ser-41 is modified to Phosphoserine. Residues 47-62 (LTPNVRKRVDALRDIQ) carry the Nuclear export signal motif. The Nuclear localization signal motif lies at 223–228 (KKKPKK). Residues 299–372 (AMEAEDFEID…DERPPECKQQ (74 aa)) are disordered. The segment covering 300 to 337 (MEAEDFEIDDDEEDDIDEDEDEEDEEDEEDDDDEDEEE) has biased composition (acidic residues). The segment covering 360-372 (GKQDERPPECKQQ) has biased composition (basic and acidic residues). Position 369 is a cysteine methyl ester (Cys-369). Cys-369 carries the S-farnesyl cysteine lipid modification. A propeptide spans 370 to 372 (KQQ) (removed in mature form).

Belongs to the nucleosome assembly protein (NAP) family. Can form homomeric and heteromeric protein complexes with NAP1;2, NAP1;3 and NAP1;4. Binds histone H2A. Interacts with PP438/PNM1. Post-translationally, prenylation of the protein is required for its function during the cell proliferation phase of leaf development. As to expression, ubiquitous.

The protein resides in the nucleus. Its subcellular location is the cytoplasm. May modulate chromatin structure by regulation of nucleosome assembly/disassembly. Contributes to the regulation of cell proliferation and cell expansion. May function in nucleotide excision repair (NER). Involved in somatic homologous recombination. This chain is Nucleosome assembly protein 1;1 (NAP1;1), found in Arabidopsis thaliana (Mouse-ear cress).